We begin with the raw amino-acid sequence, 443 residues long: MTESEKKQQKPQKAKAEKFKALSAPKGVPDYVPPTSAEFKAVKDAFTSAAHAAGYEHVELPIFEETSLFARGVGESTDVVSKEMYTFADRGGRSVTLRPEGTAGVMRAVIEHNLDRGQLPVKLVYNGPFFRYERPQAGRYRQLQQVGVEAIGVDDPALDAEVIALAHRCFSSIGLNGFRLELTSLGDWDDRPAYRQKLQDFLATLPLDEETQRRAQLNPLRVLDDKRPEMQEMLAEAPLMLDHLSDSSREHFETVTGLLDDLGVGYTINPRMVRGLDYYTKTCFEFVHDGLGAQSGIGGGGRYDGLMAQLGGQDLSGIGFGLGVDRALLALEAEEKRASTGRRVDVYGVALGAEAKRRMVGIVDDLRERGVSADMSYGNRGLKGAMKGADRAGALYALVLGDKELAEGTVTVKDLGAHEQHEVDLAAVVELLAEKTADRTAHA.

Basic and acidic residues predominate over residues 1–20 (MTESEKKQQKPQKAKAEKFK). The interval 1–21 (MTESEKKQQKPQKAKAEKFKA) is disordered.

Belongs to the class-II aminoacyl-tRNA synthetase family. In terms of assembly, homodimer.

It is found in the cytoplasm. It carries out the reaction tRNA(His) + L-histidine + ATP = L-histidyl-tRNA(His) + AMP + diphosphate + H(+). The sequence is that of Histidine--tRNA ligase from Corynebacterium jeikeium (strain K411).